A 159-amino-acid chain; its full sequence is 3-hydroxyacyl-[acyl-carrier-protein] dehydratase FabZ (159 aa).

Histidine 58 is a catalytic residue.

It belongs to the thioester dehydratase family. FabZ subfamily.

The protein resides in the cytoplasm. The enzyme catalyses a (3R)-hydroxyacyl-[ACP] = a (2E)-enoyl-[ACP] + H2O. Its function is as follows. Involved in unsaturated fatty acids biosynthesis. Catalyzes the dehydration of short chain beta-hydroxyacyl-ACPs and long chain saturated and unsaturated beta-hydroxyacyl-ACPs. This Helicobacter pylori (strain G27) protein is 3-hydroxyacyl-[acyl-carrier-protein] dehydratase FabZ.